Consider the following 516-residue polypeptide: Thioredoxin reductase 2, mitochondrial (516 aa).

62–79 is an FAD binding site; it reads DYVKPTPVGTKWGIGGTC. Cysteines 79 and 84 form a disulfide. His489 functions as the Proton acceptor in the catalytic mechanism.

It belongs to the class-I pyridine nucleotide-disulfide oxidoreductase family. Homodimer. FAD is required as a cofactor.

The protein resides in the mitochondrion. The enzyme catalyses [thioredoxin]-dithiol + NADP(+) = [thioredoxin]-disulfide + NADPH + H(+). Its function is as follows. Thioredoxin system is a major player in glutathione metabolism, due to the demonstrated absence of a glutathione reductase. Functionally interacts with the Sod/Cat reactive oxidation species (ROS) defense system and thereby has a role in preadult development and life span. Lack of a glutathione reductase suggests antioxidant defense in Drosophila, and probably in related insects, differs fundamentally from that in other organisms. In Drosophila melanogaster (Fruit fly), this protein is Thioredoxin reductase 2, mitochondrial.